A 246-amino-acid polypeptide reads, in one-letter code: uncharacterized protein (246 aa).

Disordered stretches follow at residues 29–54 (SLET…ENGS), 93–114 (LRRT…EDKF), and 148–246 (PIPP…SVVI). Residues 35 to 49 (PTSSSPSLSSNSDVS) show a composition bias toward low complexity. Polar residues predominate over residues 172 to 183 (RQQTNNIRTLHV). Low complexity-rich tracts occupy residues 190-203 (SSSS…PSSS) and 214-225 (SKTTKNRSSNSS). The N-linked (GlcNAc...) asparagine glycan is linked to Asn-219. Residues 235–246 (LTPSPTFESVVI) are compositionally biased toward polar residues.

This is an uncharacterized protein from Caenorhabditis elegans.